Here is a 66-residue protein sequence, read N- to C-terminus: DNA-binding protein 7d (66 aa).

An N6-methyllysine; partial mark is found at K5 and K7.

Belongs to the 7 kDa DNA-binding/endoribonuclease P2 family. In terms of assembly, monomer. Lys-5 was 70% monomethylated in form 7a, 25% in form 7b, and 20% in form 7d. Lys-7 was 50% monomethylated in form 7a, 40% in form 7b, and 50% in form 7d.

Its subcellular location is the cytoplasm. In terms of biological role, can constrain negative DNA supercoils. May be involved in maintaining the integrity of the genome at high temperature. The sequence is that of DNA-binding protein 7d from Sulfolobus acidocaldarius (strain ATCC 33909 / DSM 639 / JCM 8929 / NBRC 15157 / NCIMB 11770).